Reading from the N-terminus, the 445-residue chain is Putative aldehyde dehydrogenase AldX (445 aa).

Catalysis depends on residues Glu214 and Cys248.

This sequence belongs to the aldehyde dehydrogenase family.

The enzyme catalyses an aldehyde + NAD(+) + H2O = a carboxylate + NADH + 2 H(+). This chain is Putative aldehyde dehydrogenase AldX (aldX), found in Bacillus subtilis (strain 168).